Reading from the N-terminus, the 154-residue chain is Transcriptional repressor NrdR (154 aa).

A zinc finger lies at 3 to 34 (CPFCGANDTKVIDSRLVAEGEQVRRRRECLAC). The 91-residue stretch at 49–139 (PRLIKQDGSR…VYRRFQDLNE (91 aa)) folds into the ATP-cone domain.

This sequence belongs to the NrdR family. The cofactor is Zn(2+).

Its function is as follows. Negatively regulates transcription of bacterial ribonucleotide reductase nrd genes and operons by binding to NrdR-boxes. The sequence is that of Transcriptional repressor NrdR from Pseudomonas syringae pv. tomato (strain ATCC BAA-871 / DC3000).